A 96-amino-acid polypeptide reads, in one-letter code: Putative pterin-4-alpha-carbinolamine dehydratase (96 aa).

Belongs to the pterin-4-alpha-carbinolamine dehydratase family.

The enzyme catalyses (4aS,6R)-4a-hydroxy-L-erythro-5,6,7,8-tetrahydrobiopterin = (6R)-L-erythro-6,7-dihydrobiopterin + H2O. The polypeptide is Putative pterin-4-alpha-carbinolamine dehydratase (Paraburkholderia phytofirmans (strain DSM 17436 / LMG 22146 / PsJN) (Burkholderia phytofirmans)).